Here is a 318-residue protein sequence, read N- to C-terminus: Probable casein kinase I homolog ECU11_1980 (318 aa).

The Protein kinase domain occupies 8 to 276 (YTICREIGKG…YLNSLLDKIF (269 aa)). ATP-binding positions include 14–22 (IGKGGFGKV) and Lys37. The active-site Proton acceptor is Asp129.

Belongs to the protein kinase superfamily. CK1 Ser/Thr protein kinase family. Casein kinase I subfamily.

It is found in the nucleus. The enzyme catalyses L-seryl-[protein] + ATP = O-phospho-L-seryl-[protein] + ADP + H(+). The catalysed reaction is L-threonyl-[protein] + ATP = O-phospho-L-threonyl-[protein] + ADP + H(+). Involved in DNA repair. May regulate the activity of protein(s) involved in double strand break repair caused by gamma rays. The chain is Probable casein kinase I homolog ECU11_1980 from Encephalitozoon cuniculi (strain GB-M1) (Microsporidian parasite).